Reading from the N-terminus, the 23-residue chain is Phospholipase A2 homolog 4 (23 aa).

It belongs to the phospholipase A2 family. Group II subfamily. K49 sub-subfamily. As to quaternary structure, homodimer; non-covalently linked (probable alternative/compact dimer conformation in solution). Expressed by the venom gland.

It localises to the secreted. In terms of biological role, snake venom phospholipase A2 homolog that lacks enzymatic activity. Induces acute muscle damage after intramuscular injection in mice and disrupts negatively charged liposomes but not positively charged ones. Also exerts a weak anticoagulant effect only at concentrations of 40 ug/ml or higher. A model of myotoxic mechanism has been proposed: an apo Lys49-PLA2 is activated by the entrance of a hydrophobic molecule (e.g. fatty acid) at the hydrophobic channel of the protein leading to a reorientation of a monomer. This reorientation causes a transition between 'inactive' to 'active' states, causing alignment of C-terminal and membrane-docking sites (MDoS) side-by-side and putting the membrane-disruption sites (MDiS) in the same plane, exposed to solvent and in a symmetric position for both monomers. The MDoS region stabilizes the toxin on membrane by the interaction of charged residues with phospholipid head groups. Subsequently, the MDiS region destabilizes the membrane with penetration of hydrophobic residues. This insertion causes a disorganization of the membrane, allowing an uncontrolled influx of ions (i.e. calcium and sodium), and eventually triggering irreversible intracellular alterations and cell death. The polypeptide is Phospholipase A2 homolog 4 (Bothrops asper (Terciopelo)).